Here is a 501-residue protein sequence, read N- to C-terminus: Lysine--tRNA ligase (501 aa).

2 residues coordinate Mg(2+): E411 and E418.

Belongs to the class-II aminoacyl-tRNA synthetase family. Homodimer. Requires Mg(2+) as cofactor.

It is found in the cytoplasm. It carries out the reaction tRNA(Lys) + L-lysine + ATP = L-lysyl-tRNA(Lys) + AMP + diphosphate. This Pseudomonas aeruginosa (strain UCBPP-PA14) protein is Lysine--tRNA ligase.